A 596-amino-acid chain; its full sequence is Succinate dehydrogenase flavoprotein subunit (596 aa).

FAD is bound by residues 18-23 (GAGGAG), 41-56 (TKLF…AQGG), and Asp225. The residue at position 49 (His49) is a Tele-8alpha-FAD histidine. 2 residues coordinate substrate: His246 and Thr258. Arg290 functions as the Proton acceptor in the catalytic mechanism. Residue His357 coordinates substrate. FAD is bound at residue Glu391. Arg402 is a substrate binding site. 407–408 (SL) lines the FAD pocket.

The protein belongs to the FAD-dependent oxidoreductase 2 family. FRD/SDH subfamily. Part of an enzyme complex containing four subunits: a flavoprotein, an iron-sulfur, cytochrome b-556, and a hydrophobic anchor protein. FAD is required as a cofactor.

It is found in the cell inner membrane. The enzyme catalyses a quinone + succinate = fumarate + a quinol. It participates in carbohydrate metabolism; tricarboxylic acid cycle; fumarate from succinate (bacterial route): step 1/1. The chain is Succinate dehydrogenase flavoprotein subunit (sdhA) from Rickettsia conorii (strain ATCC VR-613 / Malish 7).